The chain runs to 158 residues: MGQFTVVSLGLLAVFLSLSGAKGDNCPANWISRNGVCNKLFPDRKTWLEAEMYCRALKPGCHLASLHRDSDSTVLAWYISDHFKGAGHVWIGLRDTNRKRTWKWSDRTSTNYFSWNQGEPNNVQDNENCVHLWAPSGYLKWNDEPCASLHPFICQYKL.

The N-terminal stretch at 1–23 (MGQFTVVSLGLLAVFLSLSGAKG) is a signal peptide. Intrachain disulfides connect cysteine 26–cysteine 37, cysteine 54–cysteine 154, and cysteine 129–cysteine 146. Residues 33–155 (RNGVCNKLFP…CASLHPFICQ (123 aa)) enclose the C-type lectin domain. Residues 119-121 (EPN) carry the Mannose-binding motif. Positions 127, 142, and 143 each coordinate Ca(2+).

This sequence belongs to the true venom lectin family. Expressed by the venom gland.

It is found in the secreted. Mannose-binding lectin which recognizes specific carbohydrate structures and agglutinates a variety of animal cells by binding to cell-surface glycoproteins and glycolipids. May be a calcium-dependent lectin. The chain is C-type lectin lectoxin-Enh5 from Pseudoferania polylepis (Macleay's water snake).